A 111-amino-acid chain; its full sequence is Ribonuclease P protein component (111 aa).

The protein belongs to the RnpA family. As to quaternary structure, consists of a catalytic RNA component (M1 or rnpB) and a protein subunit.

It catalyses the reaction Endonucleolytic cleavage of RNA, removing 5'-extranucleotides from tRNA precursor.. In terms of biological role, RNaseP catalyzes the removal of the 5'-leader sequence from pre-tRNA to produce the mature 5'-terminus. It can also cleave other RNA substrates such as 4.5S RNA. The protein component plays an auxiliary but essential role in vivo by binding to the 5'-leader sequence and broadening the substrate specificity of the ribozyme. The sequence is that of Ribonuclease P protein component from Borrelia garinii subsp. bavariensis (strain ATCC BAA-2496 / DSM 23469 / PBi) (Borreliella bavariensis).